The sequence spans 51 residues: uncharacterized protein (51 aa).

The disordered stretch occupies residues 1–42 (MKMKTNKYMNMVRPAPPRRADPEGVRDPSTMGGGPNPFLRRS).

It is found in the mitochondrion. This is an uncharacterized protein from Saccharomyces cerevisiae (strain ATCC 204508 / S288c) (Baker's yeast).